The primary structure comprises 267 residues: Thiamine pyrophosphokinase 2 (267 aa).

It belongs to the thiamine pyrophosphokinase family.

It localises to the cytoplasm. Its subcellular location is the cytosol. The enzyme catalyses thiamine + ATP = thiamine diphosphate + AMP + H(+). It participates in cofactor biosynthesis; thiamine diphosphate biosynthesis; thiamine diphosphate from thiamine: step 1/1. Functionally, catalyzes the phosphorylation of thiamine to thiamine pyrophosphate (TPP). TPP is an active cofactor for enzymes involved in glycolysis and energy production. Plant leaves require high levels of TPP for photosynthesis and carbohydrate metabolism. The polypeptide is Thiamine pyrophosphokinase 2 (TPK2) (Oryza sativa subsp. japonica (Rice)).